The sequence spans 253 residues: Ubiquinone/menaquinone biosynthesis C-methyltransferase UbiE (253 aa).

Residues Thr76, Asp97, 125–126, and Ser142 contribute to the S-adenosyl-L-methionine site; that span reads NA.

This sequence belongs to the class I-like SAM-binding methyltransferase superfamily. MenG/UbiE family.

The enzyme catalyses a 2-demethylmenaquinol + S-adenosyl-L-methionine = a menaquinol + S-adenosyl-L-homocysteine + H(+). It catalyses the reaction a 2-methoxy-6-(all-trans-polyprenyl)benzene-1,4-diol + S-adenosyl-L-methionine = a 5-methoxy-2-methyl-3-(all-trans-polyprenyl)benzene-1,4-diol + S-adenosyl-L-homocysteine + H(+). It functions in the pathway quinol/quinone metabolism; menaquinone biosynthesis; menaquinol from 1,4-dihydroxy-2-naphthoate: step 2/2. The protein operates within cofactor biosynthesis; ubiquinone biosynthesis. Functionally, methyltransferase required for the conversion of demethylmenaquinol (DMKH2) to menaquinol (MKH2) and the conversion of 2-polyprenyl-6-methoxy-1,4-benzoquinol (DDMQH2) to 2-polyprenyl-3-methyl-6-methoxy-1,4-benzoquinol (DMQH2). In Xylella fastidiosa (strain M12), this protein is Ubiquinone/menaquinone biosynthesis C-methyltransferase UbiE.